The sequence spans 202 residues: Holliday junction branch migration complex subunit RuvA (202 aa).

The tract at residues 1–63 is domain I; the sequence is MIASLRGTVL…EDSMTLYGFT (63 aa). The segment at 64–142 is domain II; that stretch reads SQDDRDMFHV…AFAPAESADL (79 aa). The segment at 143 to 148 is flexible linker; it reads SSAAPA. The domain III stretch occupies residues 149 to 202; the sequence is AAGPVVEDVVEALIGLGFTDKMARPVVESVVAEQPDAATPVVLRAALSQLGAKK.

The protein belongs to the RuvA family. As to quaternary structure, homotetramer. Forms an RuvA(8)-RuvB(12)-Holliday junction (HJ) complex. HJ DNA is sandwiched between 2 RuvA tetramers; dsDNA enters through RuvA and exits via RuvB. An RuvB hexamer assembles on each DNA strand where it exits the tetramer. Each RuvB hexamer is contacted by two RuvA subunits (via domain III) on 2 adjacent RuvB subunits; this complex drives branch migration. In the full resolvosome a probable DNA-RuvA(4)-RuvB(12)-RuvC(2) complex forms which resolves the HJ.

It localises to the cytoplasm. The RuvA-RuvB-RuvC complex processes Holliday junction (HJ) DNA during genetic recombination and DNA repair, while the RuvA-RuvB complex plays an important role in the rescue of blocked DNA replication forks via replication fork reversal (RFR). RuvA specifically binds to HJ cruciform DNA, conferring on it an open structure. The RuvB hexamer acts as an ATP-dependent pump, pulling dsDNA into and through the RuvAB complex. HJ branch migration allows RuvC to scan DNA until it finds its consensus sequence, where it cleaves and resolves the cruciform DNA. The chain is Holliday junction branch migration complex subunit RuvA from Corynebacterium aurimucosum (strain ATCC 700975 / DSM 44827 / CIP 107346 / CN-1) (Corynebacterium nigricans).